A 457-amino-acid polypeptide reads, in one-letter code: Ribosomal protein uS12 methylthiotransferase RimO (457 aa).

Residues 6–116 (PKVGFVSLGC…VMEAVHAALP (111 aa)) enclose the MTTase N-terminal domain. [4Fe-4S] cluster-binding residues include C15, C51, C80, C147, C151, and C154. A Radical SAM core domain is found at 133–371 (LTPRHYAYLK…AKQAQISALR (239 aa)). Residues 373-441 (ESKIGSVQQC…EHDLFGDALP (69 aa)) form the TRAM domain.

The protein belongs to the methylthiotransferase family. RimO subfamily. It depends on [4Fe-4S] cluster as a cofactor.

It is found in the cytoplasm. It catalyses the reaction L-aspartate(89)-[ribosomal protein uS12]-hydrogen + (sulfur carrier)-SH + AH2 + 2 S-adenosyl-L-methionine = 3-methylsulfanyl-L-aspartate(89)-[ribosomal protein uS12]-hydrogen + (sulfur carrier)-H + 5'-deoxyadenosine + L-methionine + A + S-adenosyl-L-homocysteine + 2 H(+). Functionally, catalyzes the methylthiolation of an aspartic acid residue of ribosomal protein uS12. The sequence is that of Ribosomal protein uS12 methylthiotransferase RimO from Xanthomonas axonopodis pv. citri (strain 306).